We begin with the raw amino-acid sequence, 689 residues long: DNA ligase (689 aa).

NAD(+)-binding positions include 51-55, 100-101, and Glu-129; these read DSEYD and SL. The active-site N6-AMP-lysine intermediate is Lys-131. NAD(+) contacts are provided by Arg-152, Glu-189, Lys-308, and Lys-332. Zn(2+) is bound by residues Cys-426, Cys-429, Cys-444, and Cys-450. The BRCT domain occupies 609 to 689; sequence ADEQPLKGQT…ELLALLAANS (81 aa).

This sequence belongs to the NAD-dependent DNA ligase family. LigA subfamily. Requires Mg(2+) as cofactor. It depends on Mn(2+) as a cofactor.

It catalyses the reaction NAD(+) + (deoxyribonucleotide)n-3'-hydroxyl + 5'-phospho-(deoxyribonucleotide)m = (deoxyribonucleotide)n+m + AMP + beta-nicotinamide D-nucleotide.. DNA ligase that catalyzes the formation of phosphodiester linkages between 5'-phosphoryl and 3'-hydroxyl groups in double-stranded DNA using NAD as a coenzyme and as the energy source for the reaction. It is essential for DNA replication and repair of damaged DNA. The polypeptide is DNA ligase (Shewanella sp. (strain ANA-3)).